Here is a 354-residue protein sequence, read N- to C-terminus: Mycothiol acetyltransferase (354 aa).

The segment covering 1–18 has biased composition (polar residues); sequence MMVDNQTPDSSTLSTAST. The tract at residues 1 to 21 is disordered; it reads MMVDNQTPDSSTLSTASTPVY. N-acetyltransferase domains follow at residues 21–176 and 191–354; these read YAEP…QTRE and LRMR…EPAA. Glutamate 52 lines the 1D-myo-inositol 2-(L-cysteinylamino)-2-deoxy-alpha-D-glucopyranoside pocket. 101–103 contributes to the acetyl-CoA binding site; it reads AAV. Residues glutamate 217, lysine 259, and glutamate 274 each contribute to the 1D-myo-inositol 2-(L-cysteinylamino)-2-deoxy-alpha-D-glucopyranoside site. Residues 278–280 and 285–291 each bind acetyl-CoA; these read VGV and QGGGLGR. A 1D-myo-inositol 2-(L-cysteinylamino)-2-deoxy-alpha-D-glucopyranoside-binding site is contributed by tyrosine 318.

Belongs to the acetyltransferase family. MshD subfamily. In terms of assembly, monomer.

It carries out the reaction 1D-myo-inositol 2-(L-cysteinylamino)-2-deoxy-alpha-D-glucopyranoside + acetyl-CoA = mycothiol + CoA + H(+). Functionally, catalyzes the transfer of acetyl from acetyl-CoA to desacetylmycothiol (Cys-GlcN-Ins) to form mycothiol. The polypeptide is Mycothiol acetyltransferase (Rothia mucilaginosa (strain DY-18) (Stomatococcus mucilaginosus)).